The sequence spans 44 residues: QLCGRGFIRAIIFACGGSRWATSPAMSIKCCIYGCTKKDISVLC.

Glutamine 1 carries the post-translational modification Pyrrolidone carboxylic acid. Disulfide bonds link cysteine 3/cysteine 31, cysteine 15/cysteine 44, and cysteine 30/cysteine 35.

Belongs to the insulin family. As to quaternary structure, heterodimer of a B chain and an A chain linked by two disulfide bonds.

The protein resides in the secreted. The polypeptide is Relaxin (Carcharias taurus (Sand tiger shark)).